We begin with the raw amino-acid sequence, 505 residues long: Formate--tetrahydrofolate ligase (505 aa).

The protein belongs to the formate--tetrahydrofolate ligase family.

The enzyme catalyses (6S)-5,6,7,8-tetrahydrofolate + formate + ATP = (6R)-10-formyltetrahydrofolate + ADP + phosphate. It participates in one-carbon metabolism; tetrahydrofolate interconversion. This Bifidobacterium longum (strain NCC 2705) protein is Formate--tetrahydrofolate ligase (fhs).